Reading from the N-terminus, the 620-residue chain is U1 small nuclear ribonucleoprotein component SNU71 (620 aa).

The span at 59–75 (NSNDDGSIHNSDQNTGL) shows a compositional bias: polar residues. Disordered stretches follow at residues 59 to 82 (NSNDDGSIHNSDQNTGLNKDKEAS), 246 to 270 (TDERNSKKEQLDDSSTQYKVDTNTL), 323 to 373 (RKNH…NRRY), 428 to 452 (HRSFKEQEERRDEEDRAKNGNAKEL), and 509 to 537 (SVESSSEDEGYRESELPPTKPSERSAAED). Over residues 246 to 256 (TDERNSKKEQL) the composition is skewed to basic and acidic residues. Residues 258–270 (DSSTQYKVDTNTL) are compositionally biased toward polar residues. Residues 296-385 (EKEKKMKSTY…MLHQLHSNTE (90 aa)) are a coiled coil. A compositionally biased stretch (acidic residues) spans 335 to 355 (TEEEDTNMEDEDEEDDTEDDL). Composition is skewed to basic and acidic residues over residues 356-373 (ALEKRKEERDLEESNRRY) and 431-445 (FKEQEERRDEEDRAK). Ser512 and Ser514 each carry phosphoserine. Residues 517–537 (EGYRESELPPTKPSERSAAED) are compositionally biased toward basic and acidic residues.

This sequence belongs to the SNU71 family. Component of the 18S U1 snRNP particle, a subcomplex of the spliceosome.

Its subcellular location is the cytoplasm. It localises to the nucleus. Its function is as follows. Component of the U1 snRNP particle, which recognizes and binds the 5'-splice site of pre-mRNA. Together with other non-snRNP factors, U1 snRNP forms the spliceosomal commitment complex, that targets pre-mRNA to the splicing pathway. The sequence is that of U1 small nuclear ribonucleoprotein component SNU71 (SNU71) from Saccharomyces cerevisiae (strain ATCC 204508 / S288c) (Baker's yeast).